A 197-amino-acid polypeptide reads, in one-letter code: Elongation factor Ts (197 aa).

The interval 81-84 (TDFV) is involved in Mg(2+) ion dislocation from EF-Tu.

The protein belongs to the EF-Ts family.

The protein localises to the cytoplasm. Associates with the EF-Tu.GDP complex and induces the exchange of GDP to GTP. It remains bound to the aminoacyl-tRNA.EF-Tu.GTP complex up to the GTP hydrolysis stage on the ribosome. The sequence is that of Elongation factor Ts from Thermotoga neapolitana (strain ATCC 49049 / DSM 4359 / NBRC 107923 / NS-E).